The following is a 545-amino-acid chain: Acetyltransferase BOT5 (545 aa).

Residues 1–19 (MATIPLFFSLILFLRLYHA) form the signal peptide. N-linked (GlcNAc...) asparagine glycans are attached at residues asparagine 70 and asparagine 198. Histidine 208 functions as the Proton acceptor in the catalytic mechanism. 2 N-linked (GlcNAc...) asparagine glycosylation sites follow: asparagine 346 and asparagine 445. The tract at residues 466 to 493 (GAGNQKSSSTRKAARHTEPTQAQTQPGR) is disordered.

It belongs to the plant acyltransferase family.

It functions in the pathway secondary metabolite biosynthesis. Its function is as follows. Acetyltransferase; part of the gene cluster that mediates the biosynthesis of botrydial. Botrydial is necessary for colonization of plant tissue by the T4 strain. It is a strain-dependent virulence factor since highly aggressive strains like SAS56 or B05 still retain substantial virulence when botrydial synthesis is impaired, since they produce also botcinic acid. The first step of botrydial biosynthesis is performed by the sesquiterpene synthase BOT2 which catalyzes the cyclization of farnesyl diphosphate (FPP) to presilphiperfolan-8-beta-ol (PSP). The cytochrome P450 monooxygenase BOT4 then catalyzes the hydroxylation at C-4 to give a probotryane intermediate. Acetylation of the hydroxyl at C-4 is carried out by the acetyltransferase BOT5, followed by the combined action of the P450 monooxygenases BOT3 and BOT1, to yield finally the glycol, via the regio- and stereospecific hydroxylations at C-10 and C-15 of the probotryane intermediates, respectively. The cleavage of the C10-C15 bond of probotryane skeleton is an intriguing and chemically important reaction, which could be mediated by some of the monooxygenases or by a combination of them. It is possible that either BOT3 or BOT1 would oxidize either the 10- or the 15-hydroxy group to the hydroperoxide derivative, which would then undergo heterolytic fragmentation to give the dialdehyde botrydial. Finally, the dehydrogenase BOT7 might be involved in the conversion of botrydial to dihydrobotrydial. In Botryotinia fuckeliana (Noble rot fungus), this protein is Acetyltransferase BOT5.